Reading from the N-terminus, the 376-residue chain is Queuine tRNA-ribosyltransferase (376 aa).

Asp-89 acts as the Proton acceptor in catalysis. Substrate contacts are provided by residues 89 to 93 (DSGGF), Asp-143, Gln-194, and Gly-221. The segment at 252-258 (GVGIPSN) is RNA binding. The active-site Nucleophile is Asp-271. The RNA binding; important for wobble base 34 recognition stretch occupies residues 276-280 (ARNGR). Cys-309, Cys-311, Cys-314, and His-340 together coordinate Zn(2+).

Belongs to the queuine tRNA-ribosyltransferase family. Homodimer. Within each dimer, one monomer is responsible for RNA recognition and catalysis, while the other monomer binds to the replacement base PreQ1. The cofactor is Zn(2+).

It catalyses the reaction 7-aminomethyl-7-carbaguanine + guanosine(34) in tRNA = 7-aminomethyl-7-carbaguanosine(34) in tRNA + guanine. It participates in tRNA modification; tRNA-queuosine biosynthesis. Catalyzes the base-exchange of a guanine (G) residue with the queuine precursor 7-aminomethyl-7-deazaguanine (PreQ1) at position 34 (anticodon wobble position) in tRNAs with GU(N) anticodons (tRNA-Asp, -Asn, -His and -Tyr). Catalysis occurs through a double-displacement mechanism. The nucleophile active site attacks the C1' of nucleotide 34 to detach the guanine base from the RNA, forming a covalent enzyme-RNA intermediate. The proton acceptor active site deprotonates the incoming PreQ1, allowing a nucleophilic attack on the C1' of the ribose to form the product. After dissociation, two additional enzymatic reactions on the tRNA convert PreQ1 to queuine (Q), resulting in the hypermodified nucleoside queuosine (7-(((4,5-cis-dihydroxy-2-cyclopenten-1-yl)amino)methyl)-7-deazaguanosine). The polypeptide is Queuine tRNA-ribosyltransferase (Clostridium botulinum (strain Okra / Type B1)).